Consider the following 92-residue polypeptide: Large ribosomal subunit protein eL43 (92 aa).

A C4-type zinc finger spans residues cysteine 39–cysteine 60.

It belongs to the eukaryotic ribosomal protein eL43 family.

The protein is Large ribosomal subunit protein eL43 (RPL37a) of Ostreococcus tauri.